Consider the following 1702-residue polypeptide: Immunoglobulin A1 protease autotransporter (1702 aa).

Residues M1–A25 form the signal peptide. In terms of domain architecture, Peptidase S6 spans A26–T332. Residue S288 is part of the active site. The tract at residues V991 to R1411 is disordered. Over residues T997–E1021 the composition is skewed to polar residues. Residues T1037–E1047 show a composition bias toward low complexity. A compositionally biased stretch (basic and acidic residues) spans S1049–Q1061. The span at K1082 to S1095 shows a compositional bias: polar residues. Composition is skewed to basic and acidic residues over residues E1104–I1132 and A1150–E1162. A run of 2 repeats spans residues A1109–K1116 and A1117–K1124. The tract at residues A1109–K1124 is 2 X 8 AA tandem repeats of A-K-V-E-K-E-E-K. 2 stretches are compositionally biased toward polar residues: residues T1163–S1186 and V1207–Q1218. Residues P1219 to Q1234 are compositionally biased toward basic and acidic residues. Composition is skewed to polar residues over residues E1235–P1255, N1263–T1305, and T1316–N1341. Over residues E1360–D1378 the composition is skewed to low complexity. Positions R1382–S1392 are enriched in basic residues. The region spanning N1450–F1702 is the Autotransporter domain.

It localises to the periplasm. It is found in the secreted. Its subcellular location is the cell surface. The protein resides in the cell outer membrane. It catalyses the reaction Cleavage of immunoglobulin A molecules at certain Pro-|-Xaa bonds in the hinge region. No small molecule substrates are known.. In terms of biological role, virulence factor; cleaves host immunoglobulin A producing intact Fc and Fab fragments. This chain is Immunoglobulin A1 protease autotransporter (iga), found in Haemophilus influenzae.